An 816-amino-acid chain; its full sequence is Probable E3 ubiquitin-protein ligase hulA (816 aa).

One can recognise a C2 domain in the interval 1 to 112 (MGSNLPAQPN…QMGGDEMLTR (112 aa)). Disordered regions lie at residues 134–238 (NLST…WERR) and 253–353 (RTTT…YFVD). Polar residues-rich tracts occupy residues 151 to 168 (MQPS…ASTP), 177 to 202 (ADPT…STIV), 217 to 226 (SRTNLSSFED), and 253 to 270 (RTTT…QTSR). Residues 229–262 (GRLPAGWERREDNLGRTYYVDHNTRTTTWTRPSN) enclose the WW 1 domain. Residues 279 to 294 (LERRAHQSRMLPEDRT) are compositionally biased toward basic and acidic residues. The span at 295–309 (GASSPNLQENQQQAQ) shows a compositional bias: polar residues. Residues 310–333 (TPPAGGSASAVSMMATGATTAGTG) are compositionally biased toward low complexity. WW domains lie at 333 to 366 (GELP…DPRR) and 393 to 426 (GPLP…DPRL). Residues 482 to 816 (SASDLKKRLM…VEETLGFGQE (335 aa)) enclose the HECT domain. The active-site Glycyl thioester intermediate is Cys-784.

Belongs to the RSP5/NEDD4 family. In terms of assembly, interacts with creD.

The protein resides in the cytoplasm. The enzyme catalyses S-ubiquitinyl-[E2 ubiquitin-conjugating enzyme]-L-cysteine + [acceptor protein]-L-lysine = [E2 ubiquitin-conjugating enzyme]-L-cysteine + N(6)-ubiquitinyl-[acceptor protein]-L-lysine.. It participates in protein modification; protein ubiquitination. Functionally, E3 ubiquitin-protein ligase which accepts ubiquitin from an E2 ubiquitin-conjugating enzyme in the form of a thioester and then directly transfers the ubiquitin to targeted substrates. Probably involved in the regulatory network controlling carbon source utilization. The sequence is that of Probable E3 ubiquitin-protein ligase hulA (hulA) from Aspergillus oryzae (strain ATCC 42149 / RIB 40) (Yellow koji mold).